A 429-amino-acid chain; its full sequence is 3-phosphoshikimate 1-carboxyvinyltransferase (429 aa).

Positions 23, 24, and 28 each coordinate 3-phosphoshikimate. Lysine 23 is a phosphoenolpyruvate binding site. 2 residues coordinate phosphoenolpyruvate: glycine 95 and arginine 123. 4 residues coordinate 3-phosphoshikimate: serine 168, glutamine 170, aspartate 316, and lysine 343. Phosphoenolpyruvate is bound at residue glutamine 170. Aspartate 316 (proton acceptor) is an active-site residue. Phosphoenolpyruvate is bound by residues arginine 347 and arginine 389.

The protein belongs to the EPSP synthase family. As to quaternary structure, monomer.

The protein resides in the cytoplasm. It carries out the reaction 3-phosphoshikimate + phosphoenolpyruvate = 5-O-(1-carboxyvinyl)-3-phosphoshikimate + phosphate. It functions in the pathway metabolic intermediate biosynthesis; chorismate biosynthesis; chorismate from D-erythrose 4-phosphate and phosphoenolpyruvate: step 6/7. In terms of biological role, catalyzes the transfer of the enolpyruvyl moiety of phosphoenolpyruvate (PEP) to the 5-hydroxyl of shikimate-3-phosphate (S3P) to produce enolpyruvyl shikimate-3-phosphate and inorganic phosphate. This chain is 3-phosphoshikimate 1-carboxyvinyltransferase, found in Bacillus cereus (strain AH187).